Here is a 325-residue protein sequence, read N- to C-terminus: Phospholipid phosphatase-related protein type 1 (325 aa).

N-linked (GlcNAc...) asparagine glycosylation occurs at asparagine 5. The next 3 helical transmembrane spans lie at 13 to 33, 67 to 87, and 127 to 147; these read IIPCFIFVELVIMAGTVLLAY, FISPLVLYCVLAATPTAIIFI, and FIGVFAFGLFATDIFVNAGQV. N-linked (GlcNAc...) asparagine glycosylation is present at asparagine 163. A run of 3 helical transmembrane segments spans residues 201–218, 230–247, and 257–277; these read AALSIYSALYATMYITST, VLCLGTLCTAFLTGLNRV, and VIAGFILGTAVALFLGMCVVH. Residue serine 307 is modified to Phosphoserine. An N-linked (GlcNAc...) asparagine glycan is attached at asparagine 316.

It belongs to the PA-phosphatase related phosphoesterase family.

The protein localises to the cell membrane. It localises to the cell projection. Its subcellular location is the neuron projection. May play a role in neurite outgrowth and neurogenesis. This Mus musculus (Mouse) protein is Phospholipid phosphatase-related protein type 1.